The sequence spans 239 residues: Norbelladine 4'-O-methyltransferase (239 aa).

S-adenosyl-L-methionine-binding positions include V55, E77, 79 to 80, S85, D103, and A132; that span reads GV. D155 is an a divalent metal cation binding site. An S-adenosyl-L-methionine-binding site is contributed by D157. A divalent metal cation-binding residues include D181 and N182.

Belongs to the class I-like SAM-binding methyltransferase superfamily. Cation-dependent O-methyltransferase family. Mg(2+) is required as a cofactor. Mostly expressed in bulbs, and, to a lower extent, in stems and roots.

It carries out the reaction norbelladine + S-adenosyl-L-methionine = 4'-O-methylnorbelladine + S-adenosyl-L-homocysteine + H(+). Its pathway is alkaloid biosynthesis. In terms of biological role, 4'-O-methyltransferase converting norbelladine to 4'-O-methylnorbelladine. 4'-O-methylnorbelladine is a precursor to all Amaryllidaceae alkaloids such as galanthamine, lycorine and haemanthamine, and including haemanthamine- and crinamine-type alkaloids, promising anticancer agents. This Narcissus pseudonarcissus (Daffodil) protein is Norbelladine 4'-O-methyltransferase.